The sequence spans 209 residues: Large ribosomal subunit protein uL3 (209 aa).

At Gln-150 the chain carries N5-methylglutamine.

Belongs to the universal ribosomal protein uL3 family. In terms of assembly, part of the 50S ribosomal subunit. Forms a cluster with proteins L14 and L19. Methylated by PrmB.

Functionally, one of the primary rRNA binding proteins, it binds directly near the 3'-end of the 23S rRNA, where it nucleates assembly of the 50S subunit. The polypeptide is Large ribosomal subunit protein uL3 (Photobacterium profundum (strain SS9)).